Reading from the N-terminus, the 402-residue chain is MALKRSNFFVDKDQQLKDNLILDITDLHVNFKVKDGILHAVRGIDLKVERGSIVGIVGESGSGKSVSVKSIIGFNDNAQTKAKLMNFKNVDITKLKKHQWKYYRGTYVSYISQDPLFSLNPTMTIGKQVKEAIYVASKRRYFQAKSDLKFALSNKEIDKKTYKSKLKEIKQTYQQKIKPINVEKKTLEILQFIGINDAKKRLKAFPSEFSGGMRQRIVIAIAVATEPDLIIADEPTTALDVTIQAKVLTLIKQLRDLLNITIIFISHNISLIANFCDFVYVMYAGKIVEQGLVEEIFTNPLHPYTWALISSIPEQKDKNKPLTSIPGVIPNMLTPPKGDAFASRNQYALAIDFEYHPPFFEVTKTHKAATWLLHPQAPKVEPPQAVIDNITLTKKALQFKDQ.

In terms of domain architecture, ABC transporter spans 22 to 309 (LDITDLHVNF…PLHPYTWALI (288 aa)). An ATP-binding site is contributed by 58-65 (GESGSGKS).

This sequence belongs to the ABC transporter superfamily. In terms of assembly, the complex is composed of two ATP-binding proteins (OppD and OppF), two transmembrane proteins (OppB and OppC) and a solute-binding protein (OppA).

It localises to the cell membrane. It catalyses the reaction a [peptide](out) + ATP + H2O = a [peptide](in) + ADP + phosphate + H(+). Part of the ABC transporter complex OppABCDF involved in the uptake of oligopeptides. Probably responsible for energy coupling to the transport system. This Mycoplasma genitalium (strain ATCC 33530 / DSM 19775 / NCTC 10195 / G37) (Mycoplasmoides genitalium) protein is Oligopeptide transport ATP-binding protein OppD (oppD).